We begin with the raw amino-acid sequence, 258 residues long: Acyl-[acyl-carrier-protein]--UDP-N-acetylglucosamine O-acyltransferase (258 aa).

It belongs to the transferase hexapeptide repeat family. LpxA subfamily. Homotrimer.

The protein resides in the cytoplasm. The enzyme catalyses a (3R)-hydroxyacyl-[ACP] + UDP-N-acetyl-alpha-D-glucosamine = a UDP-3-O-[(3R)-3-hydroxyacyl]-N-acetyl-alpha-D-glucosamine + holo-[ACP]. It participates in glycolipid biosynthesis; lipid IV(A) biosynthesis; lipid IV(A) from (3R)-3-hydroxytetradecanoyl-[acyl-carrier-protein] and UDP-N-acetyl-alpha-D-glucosamine: step 1/6. Its function is as follows. Involved in the biosynthesis of lipid A, a phosphorylated glycolipid that anchors the lipopolysaccharide to the outer membrane of the cell. This chain is Acyl-[acyl-carrier-protein]--UDP-N-acetylglucosamine O-acyltransferase, found in Pseudomonas putida (strain W619).